The sequence spans 448 residues: Phosphoglucosamine mutase (448 aa).

Residue serine 100 is the Phosphoserine intermediate of the active site. Mg(2+) contacts are provided by serine 100, aspartate 240, aspartate 242, and aspartate 244. At serine 100 the chain carries Phosphoserine.

This sequence belongs to the phosphohexose mutase family. Mg(2+) is required as a cofactor. Activated by phosphorylation.

The catalysed reaction is alpha-D-glucosamine 1-phosphate = D-glucosamine 6-phosphate. Catalyzes the conversion of glucosamine-6-phosphate to glucosamine-1-phosphate. The sequence is that of Phosphoglucosamine mutase from Bacillus pumilus (strain SAFR-032).